A 301-amino-acid polypeptide reads, in one-letter code: MNWKDVHKNFSNYKLESVGREKEIISNRVTRTGLEFADFFVHKDLKAVVLWGNDEYLYLKQFDEKLVKEKIEKIFQLTPPLVVLSRSFPAKGIILELAKKYDISILSTKESSADLTNYINTFLTEKLSKKEYLHGNLIELFGLGVLLMGKSGLGKSETSIELIKHGHMFIADDAIVCSNVFNKIIGRAPKRFFGFLEVRGLGIINASRVFGIEKVKESTQINVIIELVEFDPKVHTFERLGKDLQYKEILGVKIPYYLIPITPGKKTSDMIEVIVAQLKLMLSGYNSFKEMEEKSMEDDDE.

Residues histidine 134 and lysine 155 contribute to the active site. An ATP-binding site is contributed by 149–156; it reads GKSGLGKS. A Mg(2+)-binding site is contributed by serine 156. Aspartate 173 functions as the Proton acceptor; for phosphorylation activity. Proton donor; for dephosphorylation activity in the catalytic mechanism. Residues 196–205 are important for the catalytic mechanism of both phosphorylation and dephosphorylation; that stretch reads LEVRGLGIIN. Glutamate 197 contributes to the Mg(2+) binding site. Residue arginine 239 is part of the active site. Residues 260 to 265 are important for the catalytic mechanism of dephosphorylation; that stretch reads PITPGK.

It belongs to the HPrK/P family. In terms of assembly, homohexamer. It depends on Mg(2+) as a cofactor.

It carries out the reaction [HPr protein]-L-serine + ATP = [HPr protein]-O-phospho-L-serine + ADP + H(+). The catalysed reaction is [HPr protein]-O-phospho-L-serine + phosphate + H(+) = [HPr protein]-L-serine + diphosphate. Functionally, catalyzes the ATP- as well as the pyrophosphate-dependent phosphorylation of a specific serine residue in HPr, a phosphocarrier protein of the phosphoenolpyruvate-dependent sugar phosphotransferase system (PTS). HprK/P also catalyzes the pyrophosphate-producing, inorganic phosphate-dependent dephosphorylation (phosphorolysis) of seryl-phosphorylated HPr (P-Ser-HPr). The two antagonistic activities of HprK/P are regulated by several intracellular metabolites, which change their concentration in response to the absence or presence of rapidly metabolisable carbon sources (glucose, fructose, etc.) in the growth medium. Therefore, by controlling the phosphorylation state of HPr, HPrK/P is a sensor enzyme that plays a major role in the regulation of carbon metabolism and sugar transport: it mediates carbon catabolite repression (CCR), and regulates PTS-catalyzed carbohydrate uptake and inducer exclusion. The chain is HPr kinase/phosphorylase from Malacoplasma penetrans (strain HF-2) (Mycoplasma penetrans).